Reading from the N-terminus, the 72-residue chain is Metallothionein-like protein 1B (72 aa).

It belongs to the metallothionein superfamily. Type 15 family. Expressed in leaves of mature plants.

Functionally, metallothioneins have a high content of cysteine residues that bind various heavy metals. Functions as a metal chelator of nickel (Ni), cadmium (Cd), zinc (Zn) and copper (Cu). Possesses higher affinity for Ni and Cd ions compared to Zn and Cu ions. In Oryza sativa subsp. japonica (Rice), this protein is Metallothionein-like protein 1B (MT1B).